The primary structure comprises 478 residues: NADH-quinone oxidoreductase subunit N 1 (478 aa).

The next 14 helical transmembrane spans lie at 6–26, 33–53, 71–91, 99–119, 121–141, 156–176, 193–212, 244–264, 265–285, 299–319, 321–341, 364–384, 388–408, and 438–458; these read TVLP…SGVF, FAIT…LVAA, FADV…VTFN, FEFP…VSAS, LITL…LAAF, FVLG…VYGF, PTAA…GLAF, IAVF…VLGQ, WRDL…IGAI, IGHM…GVSG, LIYL…IIAM, FAFV…LAGF, FYVF…LGII, and AGVS…VFHP.

The protein belongs to the complex I subunit 2 family. In terms of assembly, NDH-1 is composed of 14 different subunits. Subunits NuoA, H, J, K, L, M, N constitute the membrane sector of the complex.

The protein localises to the cell inner membrane. It catalyses the reaction a quinone + NADH + 5 H(+)(in) = a quinol + NAD(+) + 4 H(+)(out). NDH-1 shuttles electrons from NADH, via FMN and iron-sulfur (Fe-S) centers, to quinones in the respiratory chain. The immediate electron acceptor for the enzyme in this species is believed to be ubiquinone. Couples the redox reaction to proton translocation (for every two electrons transferred, four hydrogen ions are translocated across the cytoplasmic membrane), and thus conserves the redox energy in a proton gradient. The polypeptide is NADH-quinone oxidoreductase subunit N 1 (Acidiphilium cryptum (strain JF-5)).